A 116-amino-acid chain; its full sequence is Large ribosomal subunit protein uL18 (116 aa).

The protein belongs to the universal ribosomal protein uL18 family. In terms of assembly, part of the 50S ribosomal subunit; part of the 5S rRNA/L5/L18/L25 subcomplex. Contacts the 5S and 23S rRNAs.

This is one of the proteins that bind and probably mediate the attachment of the 5S RNA into the large ribosomal subunit, where it forms part of the central protuberance. The chain is Large ribosomal subunit protein uL18 from Caulobacter vibrioides (strain ATCC 19089 / CIP 103742 / CB 15) (Caulobacter crescentus).